Here is an 893-residue protein sequence, read N- to C-terminus: Exocyst complex component 4 (893 aa).

The interval 1-27 is disordered; it reads MNENGATPVAAARRHRPLPAERATSNS.

Belongs to the SEC8 family. In terms of assembly, the exocyst complex is composed of sec-3/exoc1, sec-5/exoc2, sec-6/exoc3, sec-8/exoc4, sec-10/exoc5, sec-15/exoc6, exo-70/exoc7 and exo-84/exoc8. In terms of tissue distribution, pseudocoelom.

Its function is as follows. Component of the exocyst complex involved in the docking of exocytic vesicles with fusion sites on the plasma membrane. This is Exocyst complex component 4 (sec-8) from Caenorhabditis elegans.